The primary structure comprises 378 residues: F-box/kelch-repeat protein At4g29370 (378 aa).

The F-box domain occupies 23–69 (TSLFLQLPDEILVNCLARLSKSSYRSLSLVCKTFRSLLHSQPLYSAR). 4 Kelch repeats span residues 124–172 (GSKI…VLDD), 173–218 (KIYV…VRKI), 220–259 (VVGG…WSNS), and 260–305 (WCVI…NDNR).

The protein is F-box/kelch-repeat protein At4g29370 of Arabidopsis thaliana (Mouse-ear cress).